We begin with the raw amino-acid sequence, 231 residues long: 4-hydroxy-tetrahydrodipicolinate reductase (231 aa).

NAD(+)-binding positions include Asp-33, 68–70, and 92–95; these read CTT and SSNT. His-124 (proton donor/acceptor) is an active-site residue. Residue His-125 participates in (S)-2,3,4,5-tetrahydrodipicolinate binding. The active-site Proton donor is the Lys-128. 134–135 is a (S)-2,3,4,5-tetrahydrodipicolinate binding site; that stretch reads GT.

The protein belongs to the DapB family.

It is found in the cytoplasm. The enzyme catalyses (S)-2,3,4,5-tetrahydrodipicolinate + NAD(+) + H2O = (2S,4S)-4-hydroxy-2,3,4,5-tetrahydrodipicolinate + NADH + H(+). The catalysed reaction is (S)-2,3,4,5-tetrahydrodipicolinate + NADP(+) + H2O = (2S,4S)-4-hydroxy-2,3,4,5-tetrahydrodipicolinate + NADPH + H(+). The protein operates within amino-acid biosynthesis; L-lysine biosynthesis via DAP pathway; (S)-tetrahydrodipicolinate from L-aspartate: step 4/4. Catalyzes the conversion of 4-hydroxy-tetrahydrodipicolinate (HTPA) to tetrahydrodipicolinate. The sequence is that of 4-hydroxy-tetrahydrodipicolinate reductase from Brachyspira hyodysenteriae (strain ATCC 49526 / WA1).